The sequence spans 128 residues: NADPH-dependent 7-cyano-7-deazaguanine reductase (128 aa).

C39 functions as the Thioimide intermediate in the catalytic mechanism. Residue D46 is the Proton donor of the active site. Substrate is bound by residues 61-63 and 80-81; these read IEL and HE.

Belongs to the GTP cyclohydrolase I family. QueF type 1 subfamily.

The protein localises to the cytoplasm. It carries out the reaction 7-aminomethyl-7-carbaguanine + 2 NADP(+) = 7-cyano-7-deazaguanine + 2 NADPH + 3 H(+). The protein operates within tRNA modification; tRNA-queuosine biosynthesis. In terms of biological role, catalyzes the NADPH-dependent reduction of 7-cyano-7-deazaguanine (preQ0) to 7-aminomethyl-7-deazaguanine (preQ1). This is NADPH-dependent 7-cyano-7-deazaguanine reductase from Magnetococcus marinus (strain ATCC BAA-1437 / JCM 17883 / MC-1).